A 59-amino-acid polypeptide reads, in one-letter code: Salivary thrombin inhibitor XC-43 (59 aa).

Positions 1–23 (MNLQFLFIFIAFCVMLFAQIVTA) are cleaved as a signal peptide.

Interacts with human F2 (thrombin). As to expression, salivary gland (at protein level).

Its subcellular location is the secreted. Its function is as follows. Anticoagulant protein that acts as a competitive inhibitor of host thrombin. Inhibits thrombin-mediated host platelet aggregation. This Xenopsylla cheopis (Oriental rat flea) protein is Salivary thrombin inhibitor XC-43.